The chain runs to 775 residues: Chondroitin sulfate synthase 2 (775 aa).

Over 1–15 (MRASLLLSVLRPAGP) the chain is Cytoplasmic. The chain crosses the membrane as a helical; Signal-anchor for type II membrane protein span at residues 16-34 (VAVGISLGFTLSLLSVTWV). Topologically, residues 35-775 (EEPCGPGPPQ…LFEQEQGNST (741 aa)) are lumenal. The tract at residues 37-100 (PCGPGPPQPG…YHPAQPGQAA (64 aa)) is disordered. Residues 54–66 (GNTNAARRPNSVQ) show a composition bias toward polar residues. N138 and N361 each carry an N-linked (GlcNAc...) asparagine glycan. D617 provides a ligand contact to a divalent metal cation.

It belongs to the chondroitin N-acetylgalactosaminyltransferase family. Interacts with PRKN. Requires Mn(2+) as cofactor. It depends on Co(2+) as a cofactor. In terms of tissue distribution, ubiquitous. Highly expressed in pancreas, ovary, brain, heart, skeletal muscle, colon, kidney, liver, stomach, spleen and placenta. As to expression, expressed in brain, spleen, ovary, testis, lung and peripheral mononuclear cells. Also ubiquitous.

It is found in the golgi apparatus. It localises to the golgi stack membrane. The protein localises to the cytoplasm. The protein resides in the cytosol. Its subcellular location is the mitochondrion. It is found in the mitochondrion matrix. The enzyme catalyses 3-O-(beta-D-GlcA-(1-&gt;3)-beta-D-GalNAc-(1-&gt;4)-beta-D-GlcA-(1-&gt;3)-beta-D-Gal-(1-&gt;3)-beta-D-Gal-(1-&gt;4)-beta-D-Xyl)-L-seryl-[protein] + UDP-N-acetyl-alpha-D-galactosamine = 3-O-(beta-D-GalNAc-(1-&gt;4)-beta-D-GlcA-(1-&gt;3)-beta-D-GalNAc-(1-&gt;4)-beta-D-GlcA-(1-&gt;3)-beta-D-Gal-(1-&gt;3)-beta-D-Gal-(1-&gt;4)-beta-D-Xyl)-L-seryl-[protein] + UDP + H(+). It catalyses the reaction 3-O-{beta-D-GlcA-(1-&gt;3)-[beta-D-GalNAc-(1-&gt;4)-beta-D-GlcA-(1-&gt;3)](n)-beta-D-GalNAc-(1-&gt;4)-beta-D-GlcA-(1-&gt;3)-beta-D-Gal-(1-&gt;3)-beta-D-Gal-(1-&gt;4)-beta-D-Xyl}-L-seryl-[protein] + UDP-N-acetyl-alpha-D-galactosamine = 3-O-{[beta-D-GalNAc-(1-&gt;4)-beta-D-GlcA-(1-&gt;3)](n+1)-beta-D-GalNAc-(1-&gt;4)-beta-D-GlcA-(1-&gt;3)-beta-D-Gal-(1-&gt;3)-beta-D-Gal-(1-&gt;4)-beta-D-Xyl}-L-seryl-[protein] + UDP + H(+). The catalysed reaction is 3-O-(beta-D-GalNAc-(1-&gt;4)-beta-D-GlcA-(1-&gt;3)-beta-D-Gal-(1-&gt;3)-beta-D-Gal-(1-&gt;4)-beta-D-Xyl)-L-seryl-[protein] + UDP-alpha-D-glucuronate = 3-O-(beta-D-GlcA-(1-&gt;3)-beta-D-GalNAc-(1-&gt;4)-beta-D-GlcA-(1-&gt;3)-beta-D-Gal-(1-&gt;3)-beta-D-Gal-(1-&gt;4)-beta-D-Xyl)-L-seryl-[protein] + UDP + H(+). It carries out the reaction 3-O-{[beta-D-GalNAc-(1-&gt;4)-beta-D-GlcA-(1-&gt;3)](n)-beta-D-GalNAc-(1-&gt;4)-beta-D-GlcA-(1-&gt;3)-beta-D-Gal-(1-&gt;3)-beta-D-Gal-(1-&gt;4)-beta-D-Xyl}-L-seryl-[protein] + UDP-alpha-D-glucuronate = 3-O-{beta-D-GlcA-(1-&gt;3)-[beta-D-GalNAc-(1-&gt;4)-beta-D-GlcA-(1-&gt;3)](n)-beta-D-GalNAc-(1-&gt;4)-beta-D-GlcA-(1-&gt;3)-beta-D-Gal-(1-&gt;3)-beta-D-Gal-(1-&gt;4)-beta-D-Xyl}-L-seryl-[protein] + UDP + H(+). In terms of biological role, has both beta-1,3-glucuronic acid and beta-1,4-N-acetylgalactosamine transferase activity. Transfers glucuronic acid (GlcUA) from UDP-GlcUA and N-acetylgalactosamine (GalNAc) from UDP-GalNAc to the non-reducing end of the elongating chondroitin polymer. Seems to act as a specific activating factor for CHSY1 in chondroitin polymerization. May facilitate PRKN transport into the mitochondria. In collaboration with PRKN, may enhance cell viability and protect cells from oxidative stress. The sequence is that of Chondroitin sulfate synthase 2 from Homo sapiens (Human).